Reading from the N-terminus, the 79-residue chain is MAGLLQIRDALALHGNVQALQLSRQLAAPLPLVQAMLERLIAMGKVERIEQDNSACLSGSCKSCPEGQKCSSTVVYRLK.

Iron-sulfur cluster contacts are provided by Cys-56, Cys-61, Cys-64, and Cys-70.

Belongs to the FeoC family.

Functionally, may function as a transcriptional regulator that controls feoABC expression. The chain is Probable [Fe-S]-dependent transcriptional repressor from Serratia proteamaculans (strain 568).